Here is a 444-residue protein sequence, read N- to C-terminus: 3-phosphoshikimate 1-carboxyvinyltransferase (444 aa).

Residues Lys29, Ser30, and Arg34 each coordinate 3-phosphoshikimate. Lys29 is a phosphoenolpyruvate binding site. Phosphoenolpyruvate contacts are provided by Gly102 and Arg131. 4 residues coordinate 3-phosphoshikimate: Ser176, Gln178, Asp326, and Lys353. Gln178 lines the phosphoenolpyruvate pocket. Asp326 functions as the Proton acceptor in the catalytic mechanism. Phosphoenolpyruvate contacts are provided by Arg357 and Arg399.

Belongs to the EPSP synthase family. As to quaternary structure, monomer.

It is found in the cytoplasm. The catalysed reaction is 3-phosphoshikimate + phosphoenolpyruvate = 5-O-(1-carboxyvinyl)-3-phosphoshikimate + phosphate. The protein operates within metabolic intermediate biosynthesis; chorismate biosynthesis; chorismate from D-erythrose 4-phosphate and phosphoenolpyruvate: step 6/7. Functionally, catalyzes the transfer of the enolpyruvyl moiety of phosphoenolpyruvate (PEP) to the 5-hydroxyl of shikimate-3-phosphate (S3P) to produce enolpyruvyl shikimate-3-phosphate and inorganic phosphate. The sequence is that of 3-phosphoshikimate 1-carboxyvinyltransferase from Synechococcus sp. (strain JA-3-3Ab) (Cyanobacteria bacterium Yellowstone A-Prime).